The following is an 829-amino-acid chain: DNA ligase (829 aa).

A disordered region spans residues 1 to 23 (MPAQTSRARPVEEMTAAQAREAH). Residues 47–51 (DAEYD), 96–97 (SL), and E130 contribute to the NAD(+) site. The active-site N6-AMP-lysine intermediate is K132. Residues R153, E190, K306, and K330 each contribute to the NAD(+) site. C453, C456, C477, and C483 together coordinate Zn(2+). The region spanning 750 to 829 (AAAAVFSGQT…AEWLAMVEAA (80 aa)) is the BRCT domain.

The protein belongs to the NAD-dependent DNA ligase family. LigA subfamily. It depends on Mg(2+) as a cofactor. Mn(2+) is required as a cofactor.

The catalysed reaction is NAD(+) + (deoxyribonucleotide)n-3'-hydroxyl + 5'-phospho-(deoxyribonucleotide)m = (deoxyribonucleotide)n+m + AMP + beta-nicotinamide D-nucleotide.. Functionally, DNA ligase that catalyzes the formation of phosphodiester linkages between 5'-phosphoryl and 3'-hydroxyl groups in double-stranded DNA using NAD as a coenzyme and as the energy source for the reaction. It is essential for DNA replication and repair of damaged DNA. The protein is DNA ligase of Methylobacterium nodulans (strain LMG 21967 / CNCM I-2342 / ORS 2060).